Here is a 444-residue protein sequence, read N- to C-terminus: UDP-N-acetylglucosamine 1-carboxyvinyltransferase (444 aa).

A phosphoenolpyruvate-binding site is contributed by 22-23; that stretch reads KN. Arg94 serves as a coordination point for UDP-N-acetyl-alpha-D-glucosamine. Asp119 acts as the Proton donor in catalysis. Residues Asp309 and Val331 each contribute to the UDP-N-acetyl-alpha-D-glucosamine site.

It belongs to the EPSP synthase family. MurA subfamily.

Its subcellular location is the cytoplasm. It catalyses the reaction phosphoenolpyruvate + UDP-N-acetyl-alpha-D-glucosamine = UDP-N-acetyl-3-O-(1-carboxyvinyl)-alpha-D-glucosamine + phosphate. Its pathway is cell wall biogenesis; peptidoglycan biosynthesis. Cell wall formation. Adds enolpyruvyl to UDP-N-acetylglucosamine. The sequence is that of UDP-N-acetylglucosamine 1-carboxyvinyltransferase from Chlamydia trachomatis serovar A (strain ATCC VR-571B / DSM 19440 / HAR-13).